A 706-amino-acid chain; its full sequence is MGRKVTVATCALNQWALDFEGNLQRILKSIEIAKHRGARYRLGPELEICGYGCWDHYYESDTLLHSLQVLAALLESPVTQDIICDVGMPVMHRNVRYNCRVIFLNRKILLIRPKMALANEGNYRELRWFTPWSRSRQTEEYFLPRMLQDLTKQETVPFGDAVLSTWDTCIGSEVCEELWTPHSPHVDMGLDGVEIFTNASGSHHVLRKAHARVDLVTMATTKNGGIYLLANQKGCDGDRLYYDGCALIAMNGSIFAQGSQFSLDDVEVLTATLDLEDIRSYRAEISSRNLAASRVSPYPRVKVDFALSCHEDLLEPVSEPIEWKYHSPAEEISLGPACWLWDFLRRSRQAGFFLPLSGGVDSAATACLVYSMCHQVCEAVKRGNLEVLADVRTIVNQLSYTPQDPRELCGRVLTTCYMASENSSQETCDRARELAQQIGSHHIGLHIDPVVKALVGLFSLVTGASPRFAVHGGSDRENLALQNVQARVRMVIAYLFAQLSLWSRGAPGGLLVLGSANVDESLLGYLTKYDCSSADINPIGGISKTDLRAFVQLCVERFQLPALQSILAAPATAELEPLAHGRVSQTDEEDMGMTYAELSVYGRLRKVAKTGPYSMFCKLLDMWRDTCSPRQVADKVKCFFSKYSMNRHKMTTLTPAYHAESYSPDDNRFDLRPFLYNTRWPWQFRCIENQVLQLEGRQRQELDGVD.

Positions Val-5 to Leu-275 constitute a CN hydrolase domain. Glu-45 acts as the Proton acceptor; for glutaminase activity in catalysis. Lys-114 functions as the For glutaminase activity in the catalytic mechanism. Cys-175 (nucleophile; for glutaminase activity) is an active-site residue. A ligase region spans residues Tyr-325–Asp-706. Pro-355–Ser-362 provides a ligand contact to ATP. Ser-357 is an active-site residue.

It in the C-terminal section; belongs to the NAD synthetase family. In terms of assembly, homohexamer.

It catalyses the reaction deamido-NAD(+) + L-glutamine + ATP + H2O = L-glutamate + AMP + diphosphate + NAD(+) + H(+). It participates in cofactor biosynthesis; NAD(+) biosynthesis; NAD(+) from deamido-NAD(+) (L-Gln route): step 1/1. Functionally, catalyzes the ATP-dependent amidation of deamido-NAD to form NAD. Uses L-glutamine as a nitrogen source. The sequence is that of Glutamine-dependent NAD(+) synthetase (NADSYN1) from Bos taurus (Bovine).